Here is a 308-residue protein sequence, read N- to C-terminus: Oligopeptide transport ATP-binding protein OppF (308 aa).

Positions 9 to 254 (VEVKNVSLTF…PIHPYTQSLL (246 aa)) constitute an ABC transporter domain. 46-53 (GESGSGKT) contacts ATP.

Belongs to the ABC transporter superfamily. The complex is composed of two ATP-binding proteins (OppD and OppF), two transmembrane proteins (OppB and OppC) and a solute-binding protein (OppA).

The protein localises to the cell membrane. It catalyses the reaction a [peptide](out) + ATP + H2O = a [peptide](in) + ADP + phosphate + H(+). In terms of biological role, part of the ABC transporter complex OppABCDF involved in the uptake of oligopeptides. Probably responsible for energy coupling to the transport system. The protein is Oligopeptide transport ATP-binding protein OppF (oppF) of Streptococcus mutans serotype c (strain ATCC 700610 / UA159).